Here is a 332-residue protein sequence, read N- to C-terminus: Ketol-acid reductoisomerase (NADP(+)) (332 aa).

Positions 2-182 (AKVYYDEDAS…GCTRAGLIET (181 aa)) constitute a KARI N-terminal Rossmann domain. Residues 25–28 (YGSQ), serine 51, serine 53, and 83–86 (DTIQ) contribute to the NADP(+) site. Histidine 108 is a catalytic residue. Glycine 134 contacts NADP(+). Positions 183-327 (TFKEETETDL…KELRKMMPWL (145 aa)) constitute a KARI C-terminal knotted domain. The Mg(2+) site is built by aspartate 191, glutamate 195, glutamate 227, and glutamate 231. Serine 252 lines the substrate pocket.

Belongs to the ketol-acid reductoisomerase family. It depends on Mg(2+) as a cofactor.

It carries out the reaction (2R)-2,3-dihydroxy-3-methylbutanoate + NADP(+) = (2S)-2-acetolactate + NADPH + H(+). The catalysed reaction is (2R,3R)-2,3-dihydroxy-3-methylpentanoate + NADP(+) = (S)-2-ethyl-2-hydroxy-3-oxobutanoate + NADPH + H(+). The protein operates within amino-acid biosynthesis; L-isoleucine biosynthesis; L-isoleucine from 2-oxobutanoate: step 2/4. Its pathway is amino-acid biosynthesis; L-valine biosynthesis; L-valine from pyruvate: step 2/4. In terms of biological role, involved in the biosynthesis of branched-chain amino acids (BCAA). Catalyzes an alkyl-migration followed by a ketol-acid reduction of (S)-2-acetolactate (S2AL) to yield (R)-2,3-dihydroxy-isovalerate. In the isomerase reaction, S2AL is rearranged via a Mg-dependent methyl migration to produce 3-hydroxy-3-methyl-2-ketobutyrate (HMKB). In the reductase reaction, this 2-ketoacid undergoes a metal-dependent reduction by NADPH to yield (R)-2,3-dihydroxy-isovalerate. This Persephonella marina (strain DSM 14350 / EX-H1) protein is Ketol-acid reductoisomerase (NADP(+)).